Consider the following 111-residue polypeptide: Ribosome-binding factor A (111 aa).

Belongs to the RbfA family. In terms of assembly, monomer. Binds 30S ribosomal subunits, but not 50S ribosomal subunits or 70S ribosomes.

It is found in the cytoplasm. Its function is as follows. One of several proteins that assist in the late maturation steps of the functional core of the 30S ribosomal subunit. Associates with free 30S ribosomal subunits (but not with 30S subunits that are part of 70S ribosomes or polysomes). Required for efficient processing of 16S rRNA. May interact with the 5'-terminal helix region of 16S rRNA. In Helicobacter pylori (strain ATCC 700392 / 26695) (Campylobacter pylori), this protein is Ribosome-binding factor A.